Here is a 243-residue protein sequence, read N- to C-terminus: MVKIAHIHMSGCTGCLISLTDTYEKLLDILGSVELVYALTLTGEKTEITETDDKILIERDIPGGIDIALVEGSVCLDDHHSMDDILTTRKNSKKSLVALGACAASGGVTRFRRVGQMSQPSHASFVPIGDVIKVDLALPGCPPSTESIVKLLTAALEGDMEYLEPFAEIAKYGKDACGCDVIKEVINKSLCMGCGTCAAACQVNAIDMVEAKPNINSEFCIKCGICSAQCPRVRFPEIIRKLE.

2 4Fe-4S ferredoxin-type domains span residues 182-210 and 211-241; these read IKEV…DMVE and AKPN…IIRK. C191, C194, C197, C201, C220, C223, C226, and C230 together coordinate [4Fe-4S] cluster.

The protein belongs to the FrhG family. In terms of assembly, complex of alpha, beta and gamma subunits. Requires Ni(2+) as cofactor. The cofactor is iron-sulfur cluster. It depends on FAD as a cofactor.

The catalysed reaction is oxidized coenzyme F420-(gamma-L-Glu)(n) + H2 + H(+) = reduced coenzyme F420-(gamma-L-Glu)(n). Its function is as follows. Reduces the physiological low-potential two-electron acceptor coenzyme F420, and the artificial one-electron acceptor methylviologen. This Methanococcus voltae protein is Coenzyme F420 hydrogenase subunit gamma (frhG).